We begin with the raw amino-acid sequence, 380 residues long: Probable tRNA sulfurtransferase (380 aa).

The region spanning 58–162 (EEVIERLKKV…MAFVYAGVIE (105 aa)) is the THUMP domain. Residues 178–179 (LL), 203–204 (YF), arginine 260, glycine 282, and glutamine 291 contribute to the ATP site.

It belongs to the ThiI family.

The protein resides in the cytoplasm. The catalysed reaction is [ThiI sulfur-carrier protein]-S-sulfanyl-L-cysteine + a uridine in tRNA + 2 reduced [2Fe-2S]-[ferredoxin] + ATP + H(+) = [ThiI sulfur-carrier protein]-L-cysteine + a 4-thiouridine in tRNA + 2 oxidized [2Fe-2S]-[ferredoxin] + AMP + diphosphate. It catalyses the reaction [ThiS sulfur-carrier protein]-C-terminal Gly-Gly-AMP + S-sulfanyl-L-cysteinyl-[cysteine desulfurase] + AH2 = [ThiS sulfur-carrier protein]-C-terminal-Gly-aminoethanethioate + L-cysteinyl-[cysteine desulfurase] + A + AMP + 2 H(+). It functions in the pathway cofactor biosynthesis; thiamine diphosphate biosynthesis. Catalyzes the ATP-dependent transfer of a sulfur to tRNA to produce 4-thiouridine in position 8 of tRNAs, which functions as a near-UV photosensor. Also catalyzes the transfer of sulfur to the sulfur carrier protein ThiS, forming ThiS-thiocarboxylate. This is a step in the synthesis of thiazole, in the thiamine biosynthesis pathway. The sulfur is donated as persulfide by IscS. The chain is Probable tRNA sulfurtransferase from Thermoanaerobacter sp. (strain X514).